The chain runs to 564 residues: CTP synthase (564 aa).

The interval 1–265 (MTKFVFVTGG…DEIVCHRLGI (265 aa)) is amidoligase domain. Residue Ser-13 coordinates CTP. Ser-13 lines the UTP pocket. ATP-binding positions include 14–19 (SLGKGI) and Asp-71. Residues Asp-71 and Glu-139 each coordinate Mg(2+). CTP-binding positions include 146–148 (DIE), 186–191 (KTKPTQ), and Lys-222. UTP is bound by residues 186-191 (KTKPTQ) and Lys-222. Positions 290–543 (SIALVGKYVD…VRAAISFADK (254 aa)) constitute a Glutamine amidotransferase type-1 domain. An L-glutamine-binding site is contributed by Gly-351. Cys-378 serves as the catalytic Nucleophile; for glutamine hydrolysis. Residues 379–382 (LGMQ), Glu-402, and Arg-469 contribute to the L-glutamine site. Residues His-516 and Glu-518 contribute to the active site.

It belongs to the CTP synthase family. Homotetramer.

The catalysed reaction is UTP + L-glutamine + ATP + H2O = CTP + L-glutamate + ADP + phosphate + 2 H(+). The enzyme catalyses L-glutamine + H2O = L-glutamate + NH4(+). It carries out the reaction UTP + NH4(+) + ATP = CTP + ADP + phosphate + 2 H(+). Its pathway is pyrimidine metabolism; CTP biosynthesis via de novo pathway; CTP from UDP: step 2/2. With respect to regulation, allosterically activated by GTP, when glutamine is the substrate; GTP has no effect on the reaction when ammonia is the substrate. The allosteric effector GTP functions by stabilizing the protein conformation that binds the tetrahedral intermediate(s) formed during glutamine hydrolysis. Inhibited by the product CTP, via allosteric rather than competitive inhibition. Its function is as follows. Catalyzes the ATP-dependent amination of UTP to CTP with either L-glutamine or ammonia as the source of nitrogen. Regulates intracellular CTP levels through interactions with the four ribonucleotide triphosphates. The protein is CTP synthase of Nitrosomonas eutropha (strain DSM 101675 / C91 / Nm57).